We begin with the raw amino-acid sequence, 952 residues long: 2-oxoglutarate dehydrogenase E1 component (952 aa).

Belongs to the alpha-ketoglutarate dehydrogenase family. Homodimer. Part of the 2-oxoglutarate dehydrogenase (OGDH) complex composed of E1 (2-oxoglutarate dehydrogenase), E2 (dihydrolipoamide succinyltransferase) and E3 (dihydrolipoamide dehydrogenase); the complex contains multiple copies of the three enzymatic components (E1, E2 and E3). Requires thiamine diphosphate as cofactor.

The catalysed reaction is N(6)-[(R)-lipoyl]-L-lysyl-[protein] + 2-oxoglutarate + H(+) = N(6)-[(R)-S(8)-succinyldihydrolipoyl]-L-lysyl-[protein] + CO2. Functionally, E1 component of the 2-oxoglutarate dehydrogenase (OGDH) complex which catalyzes the decarboxylation of 2-oxoglutarate, the first step in the conversion of 2-oxoglutarate to succinyl-CoA and CO(2). The chain is 2-oxoglutarate dehydrogenase E1 component from Geobacillus sp. (strain WCH70).